The sequence spans 33 residues: Mu-theraphotoxin-Tp1a (33 aa).

3 disulfides stabilise this stretch: Cys2–Cys17, Cys9–Cys22, and Cys16–Cys29. Ile33 is modified (isoleucine amide).

This sequence belongs to the neurotoxin 10 (Hwtx-1) family. 55 (ProTx-III) subfamily. In terms of tissue distribution, expressed by the venom gland.

The protein localises to the secreted. Functionally, inhibits voltage-gated sodium channels without significantly altering the voltage dependence of activation or inactivation. Preferentially inhibits human Nav1.7/SCN9A (IC(50)=2.1 nM) &gt; human Nav1.6/SCN8A &gt; human Nav1.2/SCN2A &gt; human Nav1.1/SCN1A &gt; human Nav1.3/SCN3A channels. Exhibits analgesic properties by reversing spontaneous pain induced in mice by intraplantar injection with OD1 (AC P84646), a scorpion toxin that potentiates human Nav1.7/SCN9A. The sequence is that of Mu-theraphotoxin-Tp1a from Thrixopelma pruriens (Peruvian green velvet tarantula).